Reading from the N-terminus, the 481-residue chain is Cobyric acid synthase (481 aa).

The GATase cobBQ-type domain occupies 247–433; that stretch reads AFNVVVPLLP…LHGLFDVPDS (187 aa). The Nucleophile role is filled by C328. H425 is an active-site residue.

Belongs to the CobB/CobQ family. CobQ subfamily.

It functions in the pathway cofactor biosynthesis; adenosylcobalamin biosynthesis. In terms of biological role, catalyzes amidations at positions B, D, E, and G on adenosylcobyrinic A,C-diamide. NH(2) groups are provided by glutamine, and one molecule of ATP is hydrogenolyzed for each amidation. The sequence is that of Cobyric acid synthase from Alcanivorax borkumensis (strain ATCC 700651 / DSM 11573 / NCIMB 13689 / SK2).